We begin with the raw amino-acid sequence, 903 residues long: Valine--tRNA ligase (903 aa).

Over residues 1 to 15 (MVCVTDQNNETTSQN) the composition is skewed to polar residues. The tract at residues 1–21 (MVCVTDQNNETTSQNRADKLP) is disordered. The short motif at 61 to 71 (PNVTGQLHMGH) is the 'HIGH' region element. A 'KMSKS' region motif is present at residues 552–556 (KMSKS). Residue Lys555 participates in ATP binding. Positions 836 to 903 (TVDVAAERKR…RINKRLEELA (68 aa)) form a coiled coil.

The protein belongs to the class-I aminoacyl-tRNA synthetase family. ValS type 1 subfamily. Monomer.

It is found in the cytoplasm. The catalysed reaction is tRNA(Val) + L-valine + ATP = L-valyl-tRNA(Val) + AMP + diphosphate. In terms of biological role, catalyzes the attachment of valine to tRNA(Val). As ValRS can inadvertently accommodate and process structurally similar amino acids such as threonine, to avoid such errors, it has a 'posttransfer' editing activity that hydrolyzes mischarged Thr-tRNA(Val) in a tRNA-dependent manner. This chain is Valine--tRNA ligase, found in Corynebacterium glutamicum (strain ATCC 13032 / DSM 20300 / JCM 1318 / BCRC 11384 / CCUG 27702 / LMG 3730 / NBRC 12168 / NCIMB 10025 / NRRL B-2784 / 534).